Consider the following 563-residue polypeptide: Coiled-coil domain-containing protein 38 (563 aa).

Residues Met-1–Ser-11 are compositionally biased toward polar residues. The tract at residues Met-1 to Lys-21 is disordered. A coiled-coil region spans residues Lys-129–Phe-212. The disordered stretch occupies residues Glu-272–Ser-311. Over residues Asp-282–Arg-299 the composition is skewed to polar residues. 2 coiled-coil regions span residues Asn-384–Leu-415 and Arg-497–Gln-522. A disordered region spans residues Gln-522–Thr-563. Residues Pro-523 to Phe-533 show a composition bias toward basic residues.

In terms of assembly, interacts with CCDC42, CFAP53, IFT88 and ODF2. Interacts with CCDC146. Interacts with TEKT3. Interacts with ubiquitinated histone H2A.

Its subcellular location is the cytoplasm. It is found in the cytoskeleton. The protein resides in the microtubule organizing center. It localises to the centrosome. The protein localises to the perinuclear region. Its subcellular location is the cell projection. It is found in the cilium. The protein resides in the flagellum. Essential for male fertility. Required for sperm flagellum biogenesis. Also required for acrosome biogenesis. Required for the attachment of developing acrosomes to the nucleus during spermiogenesis and may be involved in the transport of fibrous sheath components. The sequence is that of Coiled-coil domain-containing protein 38 (CCDC38) from Homo sapiens (Human).